The primary structure comprises 357 residues: NADH-quinone oxidoreductase subunit H (357 aa).

A run of 8 helical transmembrane segments spans residues 22-42 (VAII…LMLV), 94-114 (IYLF…VWAV), 130-150 (LLYV…AGWA), 164-184 (AALL…VVMI), 199-219 (GGII…FFIS), 254-274 (FFLA…IMFF), 294-314 (IPGM…YLWV), and 333-353 (VFLP…QLQL).

The protein belongs to the complex I subunit 1 family. As to quaternary structure, NDH-1 is composed of 14 different subunits. Subunits NuoA, H, J, K, L, M, N constitute the membrane sector of the complex.

The protein resides in the cell inner membrane. It catalyses the reaction a quinone + NADH + 5 H(+)(in) = a quinol + NAD(+) + 4 H(+)(out). Functionally, NDH-1 shuttles electrons from NADH, via FMN and iron-sulfur (Fe-S) centers, to quinones in the respiratory chain. The immediate electron acceptor for the enzyme in this species is believed to be ubiquinone. Couples the redox reaction to proton translocation (for every two electrons transferred, four hydrogen ions are translocated across the cytoplasmic membrane), and thus conserves the redox energy in a proton gradient. This subunit may bind ubiquinone. The protein is NADH-quinone oxidoreductase subunit H of Vesicomyosocius okutanii subsp. Calyptogena okutanii (strain HA).